Consider the following 102-residue polypeptide: Matrix Gla protein (102 aa).

Ser-2, Ser-3, and Ser-5 each carry phosphoserine. A disordered region spans residues 18 to 45 (DANSFMRQPRPPNHWDSRDRFKSPRERT). Residues 27-73 (RPPNHWDSRDRFKSPRERTREKCEEYRPCERLARQVGLKRAYGKYFG) form the Gla domain. Basic and acidic residues predominate over residues 30-45 (NHWDSRDRFKSPRERT). Glu-43, Glu-47, Glu-50, and Glu-51 each carry 4-carboxyglutamate. Cys-49 and Cys-55 are oxidised to a cystine. The segment at 72–102 (FGNRRQRPSTSGRLRPRKYRASRYRNHHYRY) is disordered. Positions 85–102 (LRPRKYRASRYRNHHYRY) are enriched in basic residues.

Belongs to the osteocalcin/matrix Gla protein family. Requires vitamin K-dependent gamma-carboxylation for its function. As to expression, accounts for 35-40% of the total protein in the acid demineralization extract of calcified cartilage.

The protein resides in the secreted. Functionally, associates with the organic matrix of calcified cartilage. The polypeptide is Matrix Gla protein (mgp) (Galeorhinus galeus (Tope shark)).